The sequence spans 185 residues: Ribosome-recycling factor (185 aa).

The protein belongs to the RRF family.

Its subcellular location is the cytoplasm. In terms of biological role, responsible for the release of ribosomes from messenger RNA at the termination of protein biosynthesis. May increase the efficiency of translation by recycling ribosomes from one round of translation to another. This is Ribosome-recycling factor from Streptococcus mutans serotype c (strain ATCC 700610 / UA159).